Here is a 336-residue protein sequence, read N- to C-terminus: Tryptophan--tRNA ligase (336 aa).

Residues 9–11 (QPS) and 17–18 (GN) each bind ATP. Positions 10 to 18 (PSGTPTIGN) match the 'HIGH' region motif. Asp134 lines the L-tryptophan pocket. ATP-binding positions include 146 to 148 (GDD), Ile189, and 198 to 202 (KMSKS). The 'KMSKS' region motif lies at 198–202 (KMSKS).

Belongs to the class-I aminoacyl-tRNA synthetase family. In terms of assembly, homodimer.

It is found in the cytoplasm. It carries out the reaction tRNA(Trp) + L-tryptophan + ATP = L-tryptophyl-tRNA(Trp) + AMP + diphosphate + H(+). Its function is as follows. Catalyzes the attachment of tryptophan to tRNA(Trp). The sequence is that of Tryptophan--tRNA ligase from Enterococcus faecalis (strain ATCC 700802 / V583).